The sequence spans 693 residues: Protein-glutamine gamma-glutamyltransferase E (693 aa).

Position 111 is a phosphotyrosine (Y111). The residue at position 112 (T112) is a Phosphothreonine. A222, N225, N227, and D228 together coordinate Ca(2+). C273 is an active-site residue. Residues D302, D304, N306, S308, and D325 each contribute to the Ca(2+) site. Residues H331 and D354 contribute to the active site. Ca(2+) is bound by residues N394, T416, E444, and E449. Residues 455–482 (KAMNKLKPNASFGATSSRGPQGEEKEPS) are disordered.

Belongs to the transglutaminase superfamily. Transglutaminase family. In terms of assembly, consists of two polypeptide chains, which are synthesized as a precursor form of a single polypeptide. Ca(2+) serves as cofactor. In terms of processing, activated by proteolytic processing. In vitro activation is commonly achieved by cleavage with dispase, a neutral bacterial protease. Physiological activation may be catalyzed by CTSL and, to a lesser extent, by CTSS.

The protein resides in the cytoplasm. The enzyme catalyses L-glutaminyl-[protein] + L-lysyl-[protein] = [protein]-L-lysyl-N(6)-5-L-glutamyl-[protein] + NH4(+). In terms of biological role, catalyzes the calcium-dependent formation of isopeptide cross-links between glutamine and lysine residues in various proteins, as well as the conjugation of polyamines to proteins. Involved in the formation of the cornified envelope (CE), a specialized component consisting of covalent cross-links of proteins beneath the plasma membrane of terminally differentiated keratinocytes. Catalyzes small proline-rich proteins and LOR cross-linking to form small interchain oligomers, which are further cross-linked by TGM1 onto the growing CE scaffold. In hair follicles, involved in cross-linking structural proteins to hardening the inner root sheath. In Rattus norvegicus (Rat), this protein is Protein-glutamine gamma-glutamyltransferase E (Tgm3).